The following is a 933-amino-acid chain: Progesterone receptor (933 aa).

The AF3; mediates transcriptional activation stretch occupies residues Met1 to Leu164. The disordered stretch occupies residues Met1–Val256. Residues Met1–Ile566 are modulating, Pro-Rich. Residue Ser20 is modified to Phosphoserine. The LXXL motif 1 signature appears at Leu55–Leu59. Ser81 is modified (phosphoserine). The LXXL motif 2 motif lies at Leu115 to Leu119. Ser130 and Ser162 each carry phosphoserine. The tract at residues Met165 to His305 is mediates transcriptional transrepression. Positions Lys183–Arg187 match the Nuclear localization signal motif. Phosphoserine is present on residues Ser190 and Ser213. Over residues Glu220–Glu231 the composition is skewed to acidic residues. A compositionally biased stretch (low complexity) spans Ser232–Gly246. Position 294 is a phosphoserine; by MAPK1 (Ser294). Residues Ala335–Gly356 show a composition bias toward low complexity. A disordered region spans residues Ala335–Ser378. At Ser345 the chain carries Phosphoserine; by MAPK. Lys388 participates in a covalent cross-link: Glycyl lysine isopeptide (Lys-Gly) (interchain with G-Cter in SUMO); alternate. Lys388 participates in a covalent cross-link: Glycyl lysine isopeptide (Lys-Gly) (interchain with G-Cter in ubiquitin); alternate. Phosphoserine; by CDK2 is present on Ser400. Residues Pro415–Ser452 are disordered. Residues Pro418–Arg433 show a composition bias toward pro residues. Low complexity predominate over residues Pro434–Ser452. An AF1; mediates transcriptional activation region spans residues Ser456–Arg546. A Glycyl lysine isopeptide (Lys-Gly) (interchain with G-Cter in SUMO) cross-link involves residue Lys531. NR C4-type zinc fingers lie at residues Cys567–Cys587 and Cys603–Cys627. Residues Cys567 to Phe639 constitute a DNA-binding region (nuclear receptor). Ser676 carries the phosphoserine modification. Positions Gln679 to Ile913 constitute an NR LBD domain. Residues Leu687–Lys933 are AF2; mediates transcriptional activation. Arg766 is a progesterone binding site.

The protein belongs to the nuclear hormone receptor family. In terms of assembly, interacts with SMARD1 and UNC45A. Interacts with CUEDC2; the interaction promotes ubiquitination, decreases sumoylation, and represses transcriptional activity. Interacts with PIAS3; the interaction promotes sumoylation of PR in a hormone-dependent manner, inhibits DNA-binding, and alters nuclear export. Interacts with SP1; the interaction requires ligand-induced phosphorylation on Ser-345 by ERK1/2-MAPK. Interacts with PRMT2. Interacts with NCOA2 and NCOA1. Interacts with KLF9. Interacts with GTF2B. Phosphorylated on multiple serine sites. Several of these sites are hormone-dependent. Phosphorylation on Ser-294 is highly hormone-dependent and modulates ubiquitination and sumoylation on Lys-388. Phosphorylation on Ser-102 and Ser-345 requires induction by hormone. Basal phosphorylation on Ser-81, Ser-162, Ser-190 and Ser-400 is increased in response to progesterone and can be phosphorylated in vitro by the CDK2-A1 complex. Increased levels of phosphorylation on Ser-400 also in the presence of EGF, heregulin, IGF, PMA and FBS. Phosphorylation at this site by CDK2 is ligand-independent, and increases nuclear translocation and transcriptional activity. Phosphorylation at Ser-162 and Ser-294, but not at Ser-190, is impaired during the G(2)/M phase of the cell cycle. Phosphorylation on Ser-345 by ERK1/2 MAPK is required for interaction with SP1. In terms of processing, sumoylation is hormone-dependent and represses transcriptional activity. Sumoylation on all three sites is enhanced by PIAS3. Desumoylated by SENP1. Sumoylation on Lys-388, the main site of sumoylation, is repressed by ubiquitination on the same site, and modulated by phosphorylation at Ser-294. Post-translationally, ubiquitination is hormone-dependent and represses sumoylation on the same site. Promoted by MAPK-mediated phosphorylation on Ser-294. Ubiquitinated by UBR5, leading to its degradation: UBR5 specifically recognizes and binds ligand-bound PGR when it is not associated with coactivators (NCOAs). In presence of NCOAs, the UBR5-degron is not accessible, preventing its ubiquitination and degradation. Palmitoylated by ZDHHC7 and ZDHHC21. Palmitoylation is required for plasma membrane targeting and for rapid intracellular signaling via ERK and AKT kinases and cAMP generation.

It is found in the nucleus. The protein resides in the cytoplasm. In terms of biological role, the steroid hormones and their receptors are involved in the regulation of eukaryotic gene expression and affect cellular proliferation and differentiation in target tissues. Transcriptional activator of several progesteron-dependent promoters in a variety of cell types. Involved in activation of SRC-dependent MAPK signaling on hormone stimulation. This is Progesterone receptor (PGR) from Pan troglodytes (Chimpanzee).